The following is a 154-amino-acid chain: Cytochrome c-type biogenesis protein CcmE (154 aa).

At 1-7 the chain is on the cytoplasmic side; that stretch reads MKPRQKR. A helical; Signal-anchor for type II membrane protein membrane pass occupies residues 8–28; sequence LVLIVGIVAAVGVAAALVLNA. Residues 29–154 are Periplasmic-facing; it reads FQSNLVFFYS…GETVVKETRP (126 aa). The heme site is built by H121 and Y125. The disordered stretch occupies residues 131-154; the sequence is AEALQRAGASNQKLGETVVKETRP.

The protein belongs to the CcmE/CycJ family.

It is found in the cell inner membrane. Its function is as follows. Heme chaperone required for the biogenesis of c-type cytochromes. Transiently binds heme delivered by CcmC and transfers the heme to apo-cytochromes in a process facilitated by CcmF and CcmH. This chain is Cytochrome c-type biogenesis protein CcmE, found in Methylibium petroleiphilum (strain ATCC BAA-1232 / LMG 22953 / PM1).